The following is a 1830-amino-acid chain: Guanine nucleotide exchange factor SPIKE 1 (1830 aa).

The residue at position 1 (Met1) is an N-acetylmethionine. A disordered region spans residues 285–304 (NTGESASPSSPLAPSMTASS). The segment covering 289–304 (SASPSSPLAPSMTASS) has biased composition (low complexity). Positions 463 to 622 (FHCLYVYPVA…NIFKLRLRLC (160 aa)) constitute a C2 DOCK-type domain. A Phosphoserine modification is found at Ser1051. A Phosphothreonine modification is found at Thr1079. Phosphoserine is present on Ser1095. The DOCKER domain occupies 1379 to 1828 (MAFAPVPDLH…LSHYIPAILS (450 aa)).

It belongs to the DOCK family. Homodimer. Component of SCAR/WAVE and ARP2/3 complexes. Interacts directly with ARAC4/ROP2, ARAC1/ROP3, ARAC5/ROP4, ARAC6/ROP5, ARAC8/ROP10, ARAC9/ROP8, SCAR1, SCAR2, SCAR3, SCAR4, ABI1, ABI2, ABI3 and ABI4. Binds to the inactive GDP-bound form of ARAC3/ROP6. In terms of tissue distribution, expressed ubiquitously, in roots and aerial organs.

It is found in the cytoplasm. It localises to the endoplasmic reticulum membrane. The protein resides in the nucleus. Guanine nucleotide exchange factor (GEF) for Rho and Rac. GEF proteins activate small GTPases by exchanging bound GDP for free GTP. Controls actin polymerization via the two heteromeric complexes WAVE and actin-related protein (ARP) 2/3. Involved in cytoskeletal reorganization required for cell shape (e.g. trichome and cotyledon) control and tissue development. Prevents cortical microtubules organization into parallel arrays oriented perpendicular to the axis of cell elongation to limit anisotropic cell growth during petal development, probably by triggering ARAC4/ROP2 and ARAC3/ROP6 activity. Promotes polarized growth and cell-cell adhesion in the leaf epidermis probably by promoting the formation of endoplasmic reticulum (ER) exit site (ERES) and/or trafficking between the ER and Golgi. Triggers ARAC3/ROP6 activation required for auxin-mediated inhibition of PIN2 internalization during gravitropic responses (, PubMed:22683260). This Arabidopsis thaliana (Mouse-ear cress) protein is Guanine nucleotide exchange factor SPIKE 1.